Reading from the N-terminus, the 58-residue chain is Probable mRNA interferase HicA 2 (58 aa).

Belongs to the HicA mRNA interferase family. Probably forms a complex with the cognate antitoxin HicB 2 which inhibits the mRNA interferase activity.

Its function is as follows. Toxic component of a type II toxin-antitoxin (TA) system. A probable translation-independent mRNA interferase. The protein is Probable mRNA interferase HicA 2 (hicA2) of Photorhabdus laumondii subsp. laumondii (strain DSM 15139 / CIP 105565 / TT01) (Photorhabdus luminescens subsp. laumondii).